The sequence spans 206 residues: Pyrrolidone-carboxylate peptidase 2 (206 aa).

Active-site residues include Glu-78, Cys-141, and His-165.

Belongs to the peptidase C15 family. Homotetramer.

The protein localises to the cytoplasm. It catalyses the reaction Release of an N-terminal pyroglutamyl group from a polypeptide, the second amino acid generally not being Pro.. Removes 5-oxoproline from various penultimate amino acid residues except L-proline. This Caldanaerobacter subterraneus subsp. tengcongensis (strain DSM 15242 / JCM 11007 / NBRC 100824 / MB4) (Thermoanaerobacter tengcongensis) protein is Pyrrolidone-carboxylate peptidase 2.